The chain runs to 104 residues: L-rhamnose mutarotase (104 aa).

Y18 is a substrate binding site. H22 functions as the Proton donor in the catalytic mechanism. Substrate-binding positions include Y41 and 76-77; that span reads WW.

This sequence belongs to the rhamnose mutarotase family. As to quaternary structure, homodimer.

Its subcellular location is the cytoplasm. It carries out the reaction alpha-L-rhamnose = beta-L-rhamnose. It participates in carbohydrate metabolism; L-rhamnose metabolism. In terms of biological role, involved in the anomeric conversion of L-rhamnose. In Sinorhizobium medicae (strain WSM419) (Ensifer medicae), this protein is L-rhamnose mutarotase.